Reading from the N-terminus, the 117-residue chain is MSWRGRSTYYWPRPRRYVQPPEMIGPMRPEQFSDEVEPATPEEGEPATQCQDPAAAQKGEDEGASAGQGPKPEAHSQEQGHPQTGCECEDGPDGQEMDPPNPEEVKTPEEGEKQSQC.

Residues 1–117 (MSWRGRSTYY…PEEGEKQSQC (117 aa)) are disordered. Acidic residues-rich tracts occupy residues 32–45 (FSDE…EEGE) and 87–96 (ECEDGPDGQE). A compositionally biased stretch (basic and acidic residues) spans 103 to 117 (EEVKTPEEGEKQSQC).

It belongs to the GAGE family.

The protein is G antigen 12H (GAGE12H) of Homo sapiens (Human).